The chain runs to 374 residues: MNRLALYCRPGFEKECAAEITDKAAALEVYGFARVKENSGYVLFECYQPDDADTLARKLPFRELIFARQMLVVGELLKDLPPEDRIAPICGMLLGVVEGGGELRVEVPDTNESKELLKFCRKFTVPLRAALREQRTLLRQENPYRPVVHVLFIAPGCCYVGYSYSDNNSPFYMGIPRLKFPADAPSRSTLKLEEAFHVFIPADEWDERLGSGMRAVDLGACPGGWTYQLVQRSMMVQAIDNGPMVPSLMETGQVTHHRADGFRFTPEGDNDWLVCDMVEKPAKVSALMARWLVNGWCREAIFNLKLPMKKRYEEVSQNLATLAQVLKENGINAQIAAKQLYHDREEVTVHVRRIWGAIPGRRDEREFRRREQRD.

Residues Ser-188, 221–224 (CPGG), Asp-240, Asp-260, and Asp-276 contribute to the S-adenosyl-L-methionine site. Lys-305 serves as the catalytic Proton acceptor.

Belongs to the class I-like SAM-binding methyltransferase superfamily. RNA methyltransferase RlmE family. RlmM subfamily. As to quaternary structure, monomer.

It is found in the cytoplasm. It carries out the reaction cytidine(2498) in 23S rRNA + S-adenosyl-L-methionine = 2'-O-methylcytidine(2498) in 23S rRNA + S-adenosyl-L-homocysteine + H(+). Functionally, catalyzes the 2'-O-methylation at nucleotide C2498 in 23S rRNA. This is Ribosomal RNA large subunit methyltransferase M from Edwardsiella ictaluri (strain 93-146).